Reading from the N-terminus, the 76-residue chain is Large ribosomal subunit protein uL24 (76 aa).

This sequence belongs to the universal ribosomal protein uL24 family. As to quaternary structure, part of the 50S ribosomal subunit.

Functionally, one of two assembly initiator proteins, it binds directly to the 5'-end of the 23S rRNA, where it nucleates assembly of the 50S subunit. In terms of biological role, one of the proteins that surrounds the polypeptide exit tunnel on the outside of the subunit. This chain is Large ribosomal subunit protein uL24, found in Sulfurimonas denitrificans (strain ATCC 33889 / DSM 1251) (Thiomicrospira denitrificans (strain ATCC 33889 / DSM 1251)).